The chain runs to 148 residues: Azurin (148 aa).

Residues 1–18 (MRNQLLFALAFIPTIAAA) form the signal peptide. The Plastocyanin-like domain maps to 19-148 (ASNCEVNVSA…MMRGTVKLVD (130 aa)). Cys-22 and Cys-45 are oxidised to a cystine. The Cu cation site is built by His-65, Cys-131, His-136, and Met-140.

It localises to the periplasm. Its pathway is one-carbon metabolism; methylamine degradation. Probable electron acceptor for methylamine dehydrogenase. The sequence is that of Azurin (azu) from Methylobacillus flagellatus (strain ATCC 51484 / DSM 6875 / VKM B-1610 / KT).